The sequence spans 271 residues: Mannosyl-3-phosphoglycerate phosphatase (271 aa).

Catalysis depends on aspartate 13, which acts as the Nucleophile. Positions 13, 15, and 214 each coordinate Mg(2+).

The protein belongs to the HAD-like hydrolase superfamily. MPGP family. Mg(2+) is required as a cofactor.

The protein localises to the cytoplasm. It carries out the reaction 2-O-(alpha-D-mannosyl)-3-phosphoglycerate + H2O = (2R)-2-O-(alpha-D-mannosyl)-glycerate + phosphate. The chain is Mannosyl-3-phosphoglycerate phosphatase (yedP) from Salmonella choleraesuis (strain SC-B67).